The following is a 255-amino-acid chain: MGRHKKPETIYDIHEANDRLADVFRNHGFDLVSHSQRQQLAHFYRLLMLNQEKENFTRLLKLRDVAIKHFIDSIIIMKYTDLQFPLLDVGTGPGFPGIPLKIMYPDQQILLGEGVQRRVEFLKHVRSEMNLKNLDILGRNINKHCVYPVRGAITRAVEDIGNTLGNVMSCLEIGGRVYFMKGPGVGPEIEAAKKDWGEYYKLVQDVAYSLPQTPHERRLVVYEKIKNMPLPEEDEGEELLMDELSNEEKRRWAKY.

S-adenosyl-L-methionine is bound by residues Gly-90, Phe-95, and Arg-155. Acidic residues predominate over residues Glu-233–Ser-245. A disordered region spans residues Glu-233–Tyr-255. The segment covering Asn-246–Tyr-255 has biased composition (basic and acidic residues).

The protein belongs to the methyltransferase superfamily. RNA methyltransferase RsmG family.

It is found in the cytoplasm. It carries out the reaction guanosine(527) in 16S rRNA + S-adenosyl-L-methionine = N(7)-methylguanosine(527) in 16S rRNA + S-adenosyl-L-homocysteine. Functionally, specifically methylates the N7 position of guanine in position 527 of 16S rRNA. The chain is Ribosomal RNA small subunit methyltransferase G 2 from Bdellovibrio bacteriovorus (strain ATCC 15356 / DSM 50701 / NCIMB 9529 / HD100).